The sequence spans 231 residues: Sugar fermentation stimulation protein homolog (231 aa).

Belongs to the SfsA family.

The chain is Sugar fermentation stimulation protein homolog from Syntrophotalea carbinolica (strain DSM 2380 / NBRC 103641 / GraBd1) (Pelobacter carbinolicus).